A 282-amino-acid polypeptide reads, in one-letter code: Acetylglutamate kinase (282 aa).

Substrate contacts are provided by residues 62–63 (GG), R84, and N178.

The protein belongs to the acetylglutamate kinase family. ArgB subfamily.

The protein resides in the cytoplasm. The catalysed reaction is N-acetyl-L-glutamate + ATP = N-acetyl-L-glutamyl 5-phosphate + ADP. It participates in amino-acid biosynthesis; L-arginine biosynthesis; N(2)-acetyl-L-ornithine from L-glutamate: step 2/4. Functionally, catalyzes the ATP-dependent phosphorylation of N-acetyl-L-glutamate. The polypeptide is Acetylglutamate kinase (Thermotoga neapolitana (strain ATCC 49049 / DSM 4359 / NBRC 107923 / NS-E)).